A 448-amino-acid chain; its full sequence is MSKDYISIIDVKNHVGEEVTIGAWVANKSGKGKIAFLQLRDGTAFFQAVAFKPNFIEKFGEEAGLEKFNTIKHLNQETAIEIKGIVKEDKRSKFGYELDATDLKVIGTSDNYPITPKEHGTDFLMDHRHLWLRSRKQMAIMQIRNAVIYASYEFFDQNGFVKFDSPILSGNAAENTTDLFETDYFGEPAFLSQSGQLYLEAGAMAFGRVFDFGPVFRAEKSKTRRHLTEFWMMDAEYPFMSHEQSLDLQEAYVKTLIQGVLDRAPQALGILERDTDLLRKYIAQPFKRVSYDDAITLLQEHEEDEDTDYEHIEHGDDFGSPHETWISNYFGIPTFVVNYPASLKAFYMKPVPGNPDRVLCADLLAPEGYGEIIGGSERETDYNTLLAKIKENGLNPDDYAFYLDLRQYGSVPHCGFGLGLERMVTFVAGTKHIREAIPFPRMLHRIEP.

This sequence belongs to the class-II aminoacyl-tRNA synthetase family. Homodimer.

It localises to the cytoplasm. The enzyme catalyses tRNA(Asn) + L-asparagine + ATP = L-asparaginyl-tRNA(Asn) + AMP + diphosphate + H(+). In Streptococcus mutans serotype c (strain ATCC 700610 / UA159), this protein is Asparagine--tRNA ligase.